The sequence spans 201 residues: Adenylyl-sulfate kinase (201 aa).

The segment at 1–23 is disordered; that stretch reads MALHDENVVWHSHPVTPQQREQH. 35–42 is an ATP binding site; it reads GLSGSGKS. S109 acts as the Phosphoserine intermediate in catalysis.

It belongs to the APS kinase family.

The catalysed reaction is adenosine 5'-phosphosulfate + ATP = 3'-phosphoadenylyl sulfate + ADP + H(+). The protein operates within sulfur metabolism; hydrogen sulfide biosynthesis; sulfite from sulfate: step 2/3. Its function is as follows. Catalyzes the synthesis of activated sulfate. This chain is Adenylyl-sulfate kinase, found in Escherichia coli O127:H6 (strain E2348/69 / EPEC).